An 836-amino-acid chain; its full sequence is MSSEVKQLIVVAEGTAALGPYWQTIVSDYLEKIIRSFCGSELNGERNPVSTVELSLVIFNSHGSYCACLVQRSGWTRDVDIFLHWLSSIQFGGGGFNEVATAEGLAEALMMFSPPSGQAQPSNDLKRHCILITASNPHILPTPVYRPRLQNVERNENGDAQAESRLSDAETVASYFAKCSVSLSVVCPKQLPTIRALYNAGKPNQQSADLSIDTAKNTFYLVLISENFVEACAALSHSATNLPQTQSPVKVDRATVAPSIPVTGQPPAPVSSANGPIQNRQPVSVGPVPTATVKVEPSTVTSMAPVPSFPHIPAVARPATQAIPSIQTSSASPVSQDMVSNAENAPDIKPVVVSGMTPPLRTGPPGGANVNLLNNLSQVRQVMSSAALAGAASSVGQSAVAMHMSNMISTGMATSLPPSQTVFSTGQQGITSMAGSGALMGSAQTGQSPGPNNAFSPQTTSNVASNLGVSQPMQGMNQGSHSGAMMQGGISMNQNMMSGLGQGNVSSGTGGMMPTPGVGQQAQSGIQQLGGSNSSAPNMQLSQPSSGAMQTSQSKYVKVWEGNLSGQRQGQPVLITRLEGYRSASASDSLAANWPPTMQIVRLISQDHMNNKQYVGKADFLVFRAMSQHGFLGQLQDKKLCAVIQLPSQTLLLSVSDKACRLIGMLFPGDMVVFKPQIPNQQQQQQQQLHQQQQQQQQIQQQQQQQQHLQQQQMPQLQQQQQQHQQQQQQQHQLSQLQHHQQQQQQQQQQQQQHQLTQLQHHHQQQQQASPLNQMQQQTSPLNQMQQQTSPLNQMQQQQQPQQMVMGGQAFAQAPGRSQQGGGGGQPNMPGAGFMG.

4 disordered regions span residues 260–285 (IPVT…PVSV), 435–466 (GSGA…VASN), 518–547 (VGQQ…PSSG), and 731–836 (QHQL…GFMG). Composition is skewed to polar residues over residues 271 to 282 (SSANGPIQNRQP) and 442 to 466 (SAQT…VASN). Positions 680 to 761 (NQQQQQQQQL…QQHQLTQLQH (82 aa)) form a coiled coil. Low complexity-rich tracts occupy residues 731-818 (QHQL…PGRS) and 827-836 (PNMPGAGFMG).

This sequence belongs to the Mediator complex subunit 25 family. As to quaternary structure, component of the Mediator complex. Interacts with the transcription factors BBX20, RAP2-2, ERF1B, ERF091, ERF095, ERF098, ERF109, HB29, PHL1, DREB2A, ABI5 and MYC2. Interacts with the E3 ubiquitin-protein ligases MBR1 and MBR2.

The protein resides in the nucleus. Its function is as follows. Component of the Mediator complex, a coactivator involved in the regulated transcription of nearly all RNA polymerase II-dependent genes. Mediator functions as a bridge to convey information from gene-specific regulatory proteins to the basal RNA polymerase II transcription machinery. Mediator is recruited to promoters by direct interactions with regulatory proteins and serves as a scaffold for the assembly of a functional preinitiation complex with RNA polymerase II and the general transcription factors. Positive regulator of shade avoidance and of jasmonate signaling. Acts in repression of PhyB-mediated light signaling and regulates the expression of FLOWERING LOCUS T (FT) and of CONSTANS (CO). The chain is Mediator of RNA polymerase II transcription subunit 25 (MED25) from Arabidopsis thaliana (Mouse-ear cress).